We begin with the raw amino-acid sequence, 136 residues long: Acyl carrier protein 2, chloroplastic (136 aa).

The transit peptide at 1–51 (MASIAASASISLQARPRQLAIAASQVKSFSNGRRSSLSFNLRQLPTRLTVS) directs the protein to the chloroplast. Positions 56–131 (PETVDKVCAV…QAAALIEELL (76 aa)) constitute a Carrier domain. O-(pantetheine 4'-phosphoryl)serine is present on serine 91.

This sequence belongs to the acyl carrier protein (ACP) family. Post-translationally, 4'-phosphopantetheine is transferred from CoA to a specific serine of apo-ACP by acpS. This modification is essential for activity because fatty acids are bound in thioester linkage to the sulfhydryl of the prosthetic group.

It is found in the plastid. It localises to the chloroplast. In terms of biological role, carrier of the growing fatty acid chain in fatty acid biosynthesis. This Arabidopsis thaliana (Mouse-ear cress) protein is Acyl carrier protein 2, chloroplastic (ACP2).